Consider the following 204-residue polypeptide: Large ribosomal subunit protein uL4 (204 aa).

Residues 53–74 are disordered; the sequence is AYVSGGGKKPWRQKGRGGARAG.

The protein belongs to the universal ribosomal protein uL4 family. Part of the 50S ribosomal subunit.

Its function is as follows. One of the primary rRNA binding proteins, this protein initially binds near the 5'-end of the 23S rRNA. It is important during the early stages of 50S assembly. It makes multiple contacts with different domains of the 23S rRNA in the assembled 50S subunit and ribosome. Functionally, forms part of the polypeptide exit tunnel. The polypeptide is Large ribosomal subunit protein uL4 (Campylobacter curvus (strain 525.92)).